A 239-amino-acid chain; its full sequence is Ribose-5-phosphate isomerase A (239 aa).

Residues 40–43 (SGST), 96–99 (DGAD), and 110–113 (KGGG) each bind substrate. Catalysis depends on glutamate 119, which acts as the Proton acceptor. Lysine 137 lines the substrate pocket.

It belongs to the ribose 5-phosphate isomerase family. As to quaternary structure, homodimer.

It catalyses the reaction aldehydo-D-ribose 5-phosphate = D-ribulose 5-phosphate. Its pathway is carbohydrate degradation; pentose phosphate pathway; D-ribose 5-phosphate from D-ribulose 5-phosphate (non-oxidative stage): step 1/1. Functionally, catalyzes the reversible conversion of ribose-5-phosphate to ribulose 5-phosphate. The protein is Ribose-5-phosphate isomerase A of Methanococcus maripaludis (strain C7 / ATCC BAA-1331).